The chain runs to 185 residues: Ribosome-recycling factor (185 aa).

It belongs to the RRF family.

The protein localises to the cytoplasm. In terms of biological role, responsible for the release of ribosomes from messenger RNA at the termination of protein biosynthesis. May increase the efficiency of translation by recycling ribosomes from one round of translation to another. In Alkalilimnicola ehrlichii (strain ATCC BAA-1101 / DSM 17681 / MLHE-1), this protein is Ribosome-recycling factor.